A 100-amino-acid chain; its full sequence is Small ribosomal subunit protein uS14 (100 aa).

It belongs to the universal ribosomal protein uS14 family. As to quaternary structure, part of the 30S ribosomal subunit. Contacts proteins S3 and S10.

In terms of biological role, binds 16S rRNA, required for the assembly of 30S particles and may also be responsible for determining the conformation of the 16S rRNA at the A site. This is Small ribosomal subunit protein uS14 from Picosynechococcus sp. (strain ATCC 27264 / PCC 7002 / PR-6) (Agmenellum quadruplicatum).